Reading from the N-terminus, the 210-residue chain is Isochorismatase domain-containing protein 2 (210 aa).

Residue Ser7 is modified to Phosphoserine.

It belongs to the isochorismatase family. In terms of assembly, interacts with CDKN2A.

It is found in the cytoplasm. The protein resides in the nucleus. The chain is Isochorismatase domain-containing protein 2 (Isoc2) from Rattus norvegicus (Rat).